The sequence spans 144 residues: Peptide methionine sulfoxide reductase MsrB (144 aa).

Residues 6–128 (KDELKKKLTP…NSAALRFIPK (123 aa)) form the MsrB domain. Residue cysteine 117 is the Nucleophile of the active site.

Belongs to the MsrB Met sulfoxide reductase family.

The enzyme catalyses L-methionyl-[protein] + [thioredoxin]-disulfide + H2O = L-methionyl-(R)-S-oxide-[protein] + [thioredoxin]-dithiol. The polypeptide is Peptide methionine sulfoxide reductase MsrB (Shouchella clausii (strain KSM-K16) (Alkalihalobacillus clausii)).